Here is a 197-residue protein sequence, read N- to C-terminus: Ras-like protein rasB (197 aa).

13–20 lines the GTP pocket; it reads GGGGVGKS. The short motif at 35-43 is the Effector region element; that stretch reads YDPTIEDSY. Residues 60–64 and 119–122 contribute to the GTP site; these read DTAGQ and NKCD. A Cysteine methyl ester modification is found at C194. The S-geranylgeranyl cysteine moiety is linked to residue C194. A propeptide spans 195-197 (removed in mature form); that stretch reads LIL.

It belongs to the small GTPase superfamily. Ras family.

The protein resides in the cell membrane. It catalyses the reaction GTP + H2O = GDP + phosphate + H(+). Alternates between an inactive form bound to GDP and an active form bound to GTP. Activated by a guanine nucleotide-exchange factor (GEF) and inactivated by a GTPase-activating protein (GAP). In terms of biological role, ras proteins bind GDP/GTP and possess intrinsic GTPase activity. This chain is Ras-like protein rasB (rasB), found in Dictyostelium discoideum (Social amoeba).